A 105-amino-acid polypeptide reads, in one-letter code: MKVHKGDTVLVIAGKDKGAKGKVIAAYPERSRVLVEGVNRIKKHTPQSANERGASSGGIVTQEAPIHVSNVMVIDSDGQPTRIGYRVDEETGKKVRISRRNGKDI.

The tract at residues 40–61 is disordered; it reads RIKKHTPQSANERGASSGGIVT.

It belongs to the universal ribosomal protein uL24 family. As to quaternary structure, part of the 50S ribosomal subunit.

One of two assembly initiator proteins, it binds directly to the 5'-end of the 23S rRNA, where it nucleates assembly of the 50S subunit. Its function is as follows. One of the proteins that surrounds the polypeptide exit tunnel on the outside of the subunit. This Mycobacteroides abscessus (strain ATCC 19977 / DSM 44196 / CCUG 20993 / CIP 104536 / JCM 13569 / NCTC 13031 / TMC 1543 / L948) (Mycobacterium abscessus) protein is Large ribosomal subunit protein uL24.